Reading from the N-terminus, the 447-residue chain is Glutamate--tRNA ligase 1 (447 aa).

The 'HIGH' region signature appears at 10–20; it reads PSPTGMLHVGN. Positions 240–244 match the 'KMSKS' region motif; sequence KISKR. Lysine 243 contacts ATP.

The protein belongs to the class-I aminoacyl-tRNA synthetase family. Glutamate--tRNA ligase type 1 subfamily. In terms of assembly, monomer.

The protein resides in the cytoplasm. The catalysed reaction is tRNA(Glu) + L-glutamate + ATP = L-glutamyl-tRNA(Glu) + AMP + diphosphate. In terms of biological role, catalyzes the attachment of glutamate to tRNA(Glu) in a two-step reaction: glutamate is first activated by ATP to form Glu-AMP and then transferred to the acceptor end of tRNA(Glu). This is Glutamate--tRNA ligase 1 from Rickettsia massiliae (strain Mtu5).